The following is a 1340-amino-acid chain: Early transcription factor large subunit homolog (1340 aa).

It belongs to the asfivirus G1340L family.

Its subcellular location is the virion. Its function is as follows. Putative initation factor. The chain is Early transcription factor large subunit homolog from African swine fever virus (strain Badajoz 1971 Vero-adapted) (Ba71V).